The chain runs to 128 residues: Protein FAM229A (128 aa).

The tract at residues Met-1–Pro-96 is disordered.

Belongs to the FAM229 family.

In Mus musculus (Mouse), this protein is Protein FAM229A (Fam229a).